A 670-amino-acid chain; its full sequence is Probable membrane-anchored ferredoxin csal_0991 (670 aa).

5 helical membrane-spanning segments follow: residues 2–22 (LDILLPILIFSALALAAIGAV), 68–90 (VATAGGFVAAMGLAIVVHGLGLA), 94–113 (LGWLLLAASATMFAGSLFVA), 135–155 (LMAFSLGIFVVTLPAVGVLPA), and 159–179 (GWLVALVLAAVVAWGLAELVF). 4Fe-4S ferredoxin-type domains follow at residues 241 to 271 (WNQLLGFDACVQCGRCEAVCPAFAAGQPLNP) and 316 to 347 (GTALVDAETLWSCTTCRACVEECPMMIEHVDA). [4Fe-4S] cluster contacts are provided by Cys-250, Cys-253, Cys-256, Cys-260, Cys-328, Cys-331, Cys-334, and Cys-338. The segment at 648–670 (NTPPATPASHDTAASQATEEVLS) is disordered. Over residues 659 to 670 (TAASQATEEVLS) the composition is skewed to polar residues.

[4Fe-4S] cluster is required as a cofactor.

It localises to the cell inner membrane. Its function is as follows. Participates in the electron transfer process during N,N-dimethylglycine (DMG) degradation to sarcosine. Probably transfers the electrons from N,N-dimethylglycine/sarcosine dehydrogenase (DMGDH) to the electron transfer flavoprotein (ETF) EtfA-EtfB. In Chromohalobacter salexigens (strain ATCC BAA-138 / DSM 3043 / CIP 106854 / NCIMB 13768 / 1H11), this protein is Probable membrane-anchored ferredoxin csal_0991.